Consider the following 539-residue polypeptide: Gamma-2-syntrophin (539 aa).

The region spanning 73–156 is the PDZ domain; the sequence is TVTLRRQPVG…DVTITVEYLR (84 aa). Residues 296–421 form the PH domain; the sequence is QVVHMGWVNE…WEKAFQRATF (126 aa).

This sequence belongs to the syntrophin family. Interacts with the dystrophin protein DMD and related proteins DTNA and DTNB.

It is found in the cell membrane. The protein localises to the sarcolemma. The protein resides in the cytoplasm. It localises to the cytoskeleton. Adapter protein that binds to and probably organizes the subcellular localization of a variety of proteins. May link various receptors to the actin cytoskeleton and the dystrophin glycoprotein complex. The chain is Gamma-2-syntrophin (Sntg2) from Mus musculus (Mouse).